The sequence spans 121 residues: UPF0344 protein BCE_1257 (121 aa).

4 helical membrane-spanning segments follow: residues 6 to 26, 38 to 58, 65 to 85, and 92 to 112; these read ITAWALGLILFFVAYSLYSAG, LMYIFIIVTGFMLYMSIVKTA, WYGLKMLAGILVIGGMEMVLV, and PTGAVWGLFIVALVAVIYLGL.

Belongs to the UPF0344 family.

It is found in the cell membrane. In Bacillus cereus (strain ATCC 10987 / NRS 248), this protein is UPF0344 protein BCE_1257.